We begin with the raw amino-acid sequence, 159 residues long: SsrA-binding protein (159 aa).

Belongs to the SmpB family.

The protein resides in the cytoplasm. Required for rescue of stalled ribosomes mediated by trans-translation. Binds to transfer-messenger RNA (tmRNA), required for stable association of tmRNA with ribosomes. tmRNA and SmpB together mimic tRNA shape, replacing the anticodon stem-loop with SmpB. tmRNA is encoded by the ssrA gene; the 2 termini fold to resemble tRNA(Ala) and it encodes a 'tag peptide', a short internal open reading frame. During trans-translation Ala-aminoacylated tmRNA acts like a tRNA, entering the A-site of stalled ribosomes, displacing the stalled mRNA. The ribosome then switches to translate the ORF on the tmRNA; the nascent peptide is terminated with the 'tag peptide' encoded by the tmRNA and targeted for degradation. The ribosome is freed to recommence translation, which seems to be the essential function of trans-translation. This chain is SsrA-binding protein, found in Coxiella burnetii (strain CbuK_Q154) (Coxiella burnetii (strain Q154)).